The primary structure comprises 555 residues: Potassium-transporting ATPase potassium-binding subunit (555 aa).

The next 10 membrane-spanning stretches (helical) occupy residues 2-22 (IWVAVVITMLLFILVAKPTGI), 60-80 (QYALSLVLLNGFMIVVVYFIF), 130-150 (IGITFLMFAAPATTLALVMAF), 173-193 (VFLPIAFMAALVFVALGVPQT), 246-266 (MSNILQMMLMMLLPTALPFTY), 278-298 (ILFVSLFMVFLLGFITITTSE), 374-394 (AGFVNIIMYAIIAVFISGLMV), 412-432 (LIAVTILFHPLLILGFSALAL), 483-503 (LVMFLGRYFSLITMLAVAASL), and 525-545 (GIFIGTIVIVGALTFFPMLVL).

This sequence belongs to the KdpA family. As to quaternary structure, the system is composed of three essential subunits: KdpA, KdpB and KdpC.

It is found in the cell membrane. Part of the high-affinity ATP-driven potassium transport (or Kdp) system, which catalyzes the hydrolysis of ATP coupled with the electrogenic transport of potassium into the cytoplasm. This subunit binds the extracellular potassium ions and delivers the ions to the membrane domain of KdpB through an intramembrane tunnel. The chain is Potassium-transporting ATPase potassium-binding subunit from Bacillus anthracis (strain A0248).